We begin with the raw amino-acid sequence, 78 residues long: MAQQQKKRRKRKVKKCKLCEMKVEYVDYKDLRLLNEFLTDKAKIIPKRVTGNCAKHQRMIKIAIKRARHMALLPFIKL.

It belongs to the bacterial ribosomal protein bS18 family. In terms of assembly, part of the 30S ribosomal subunit. Forms a tight heterodimer with protein bS6.

In terms of biological role, binds as a heterodimer with protein bS6 to the central domain of the 16S rRNA, where it helps stabilize the platform of the 30S subunit. This chain is Small ribosomal subunit protein bS18, found in Pseudothermotoga lettingae (strain ATCC BAA-301 / DSM 14385 / NBRC 107922 / TMO) (Thermotoga lettingae).